The primary structure comprises 302 residues: Protoheme IX farnesyltransferase (302 aa).

9 helical membrane-spanning segments follow: residues 28-48 (VVAL…PGVP), 50-70 (WSVL…AAVV), 95-115 (IAPL…MVVL), 122-142 (LTAW…TLFL), 150-170 (IVIG…AVTG), 176-196 (ALLL…ALAI), 221-241 (LHIL…FVTG), 243-263 (SGGI…QYAV), and 282-302 (ITYL…FVPA).

This sequence belongs to the UbiA prenyltransferase family. Protoheme IX farnesyltransferase subfamily.

It localises to the cell inner membrane. The enzyme catalyses heme b + (2E,6E)-farnesyl diphosphate + H2O = Fe(II)-heme o + diphosphate. Its pathway is porphyrin-containing compound metabolism; heme O biosynthesis; heme O from protoheme: step 1/1. In terms of biological role, converts heme B (protoheme IX) to heme O by substitution of the vinyl group on carbon 2 of heme B porphyrin ring with a hydroxyethyl farnesyl side group. The chain is Protoheme IX farnesyltransferase from Marinobacter nauticus (strain ATCC 700491 / DSM 11845 / VT8) (Marinobacter aquaeolei).